We begin with the raw amino-acid sequence, 358 residues long: Homoserine O-acetyltransferase (358 aa).

Residues 41–343 (NAVLICHALT…DYGHDAFLVD (303 aa)) enclose the AB hydrolase-1 domain. Residue S143 is the Nucleophile of the active site. R212 contributes to the substrate binding site. Residues D304 and H337 contribute to the active site. D338 is a substrate binding site.

This sequence belongs to the AB hydrolase superfamily. MetX family. As to quaternary structure, homodimer.

Its subcellular location is the cytoplasm. The enzyme catalyses L-homoserine + acetyl-CoA = O-acetyl-L-homoserine + CoA. Its pathway is amino-acid biosynthesis; L-methionine biosynthesis via de novo pathway; O-acetyl-L-homoserine from L-homoserine: step 1/1. Transfers an acetyl group from acetyl-CoA to L-homoserine, forming acetyl-L-homoserine. This chain is Homoserine O-acetyltransferase, found in Haemophilus influenzae (strain 86-028NP).